Here is a 602-residue protein sequence, read N- to C-terminus: Elongation factor 4 (602 aa).

The tr-type G domain maps to Ser-7 to Gln-189. Residues Asp-19–Thr-24 and Asn-136–Asp-139 each bind GTP.

It belongs to the TRAFAC class translation factor GTPase superfamily. Classic translation factor GTPase family. LepA subfamily.

Its subcellular location is the cell inner membrane. It carries out the reaction GTP + H2O = GDP + phosphate + H(+). Functionally, required for accurate and efficient protein synthesis under certain stress conditions. May act as a fidelity factor of the translation reaction, by catalyzing a one-codon backward translocation of tRNAs on improperly translocated ribosomes. Back-translocation proceeds from a post-translocation (POST) complex to a pre-translocation (PRE) complex, thus giving elongation factor G a second chance to translocate the tRNAs correctly. Binds to ribosomes in a GTP-dependent manner. In Prochlorococcus marinus subsp. pastoris (strain CCMP1986 / NIES-2087 / MED4), this protein is Elongation factor 4.